Reading from the N-terminus, the 354-residue chain is Membrane progestin receptor alpha-B (354 aa).

Over 1-76 the chain is Cytoplasmic; that stretch reads MATVVMEQIG…LTLFQRHNES (76 aa). A helical transmembrane segment spans residues 77-97; sequence VNVWTHLLASLIILVKFQELS. Over 98–110 the chain is Extracellular; that stretch reads ETVDFLRDPHAQP. Residues 111–131 form a helical membrane-spanning segment; it reads MFILLLAAFTYLGCSALAHLL. Residues 132 to 141 are Cytoplasmic-facing; it reads SAKSEISHYT. A helical transmembrane segment spans residues 142 to 162; it reads FYFLDYVGVAVYQYGSALAHF. Over 163–175 the chain is Extracellular; the sequence is YYVVEEEWHAQVR. The chain crosses the membrane as a helical span at residues 176–196; it reads TFFLPASAFLAWLSCTGCCYG. Topologically, residues 197–244 are cytoplasmic; that stretch reads KYASPKLPKFVHKLFQVVPSGLAYCLDISPVLHRIYRCYSSEHWCADQ. Residues 245–265 traverse the membrane as a helical segment; sequence AVVYHCYQVLFFLISAYFFSY. Topologically, residues 266–277 are extracellular; that stretch reads PHPERWFPGRCD. A helical transmembrane segment spans residues 278–298; it reads FIGQGHQIFHVFLVLCTLVQI. The Cytoplasmic segment spans residues 299–318; it reads EAVRLDYTERRRLYEHLHGD. The chain crosses the membrane as a helical span at residues 319-339; sequence LAHDAVALFIFTACCSALTAF. Residues 340–354 lie on the Extracellular side of the membrane; sequence YVRKRVKTYLEEKQE.

The protein belongs to the ADIPOR family.

It localises to the cell membrane. In terms of biological role, steroid membrane receptor. Signals upon progestin binding, resulting in rapid activation of MAPK and down-regulation of adenylyl cyclase activity. Interacts with steroids with varying degrees of affinity, showing specificity for activation by the maturation-inducing steroid (MIS) 4-pregnen-17,20beta-diol-3-one (17,20beta-DHP). Capable of mediating progestin-induced oocyte maturation. In Danio rerio (Zebrafish), this protein is Membrane progestin receptor alpha-B (paqr7b).